The sequence spans 137 residues: Ribonuclease VapC27 (137 aa).

Residues 7 to 125 (VDTSVAIPLL…ATRDARAKDT (119 aa)) form the PINc domain. Mg(2+)-binding residues include Asp-8 and Asp-101.

This sequence belongs to the PINc/VapC protein family. As to quaternary structure, interacts with cognate antitoxin VapB27. The cofactor is Mg(2+).

It is found in the secreted. Functionally, probably the toxic component of a type II toxin-antitoxin (TA) system. An RNase. Its cognate antitoxin is VapB27. In Mycobacterium tuberculosis (strain ATCC 25618 / H37Rv), this protein is Ribonuclease VapC27.